A 577-amino-acid polypeptide reads, in one-letter code: Adenine deaminase (577 aa).

The protein belongs to the metallo-dependent hydrolases superfamily. Adenine deaminase family. Mn(2+) serves as cofactor.

It catalyses the reaction adenine + H2O + H(+) = hypoxanthine + NH4(+). This Geobacillus kaustophilus (strain HTA426) protein is Adenine deaminase.